The chain runs to 181 residues: Large ribosomal subunit protein uL5 (181 aa).

It belongs to the universal ribosomal protein uL5 family. As to quaternary structure, part of the 50S ribosomal subunit; part of the 5S rRNA/L5/L18/L25 subcomplex. Contacts the 5S rRNA and the P site tRNA. Forms a bridge to the 30S subunit in the 70S ribosome.

In terms of biological role, this is one of the proteins that bind and probably mediate the attachment of the 5S RNA into the large ribosomal subunit, where it forms part of the central protuberance. In the 70S ribosome it contacts protein S13 of the 30S subunit (bridge B1b), connecting the 2 subunits; this bridge is implicated in subunit movement. Contacts the P site tRNA; the 5S rRNA and some of its associated proteins might help stabilize positioning of ribosome-bound tRNAs. The chain is Large ribosomal subunit protein uL5 from Onion yellows phytoplasma (strain OY-M).